A 369-amino-acid chain; its full sequence is Glutamate 5-kinase (369 aa).

Lys-9 provides a ligand contact to ATP. The substrate site is built by Ser-49, Asp-136, and Asn-148. Residues 168–169 (TD) and 210–216 (TGGMLTK) each bind ATP. The region spanning 275 to 355 (RGSVYVDEGA…KGVFIHRDDW (81 aa)) is the PUA domain.

The protein belongs to the glutamate 5-kinase family.

Its subcellular location is the cytoplasm. It catalyses the reaction L-glutamate + ATP = L-glutamyl 5-phosphate + ADP. The protein operates within amino-acid biosynthesis; L-proline biosynthesis; L-glutamate 5-semialdehyde from L-glutamate: step 1/2. Its function is as follows. Catalyzes the transfer of a phosphate group to glutamate to form L-glutamate 5-phosphate. In Neisseria meningitidis serogroup B (strain ATCC BAA-335 / MC58), this protein is Glutamate 5-kinase.